We begin with the raw amino-acid sequence, 134 residues long: Zinc finger protein 593 (134 aa).

Residues 1–25 (MGRSRRTGAHRAHSLARQMKAKRRR) show a composition bias toward basic residues. 2 disordered regions span residues 1 to 57 (MGRS…DLPG) and 82 to 134 (SKDH…DTST). Positions 26-36 (PDLDEIHRELR) are enriched in basic and acidic residues. The segment at 61-85 (HRCLACARYFIDSTNLKTHFRSKDH) adopts a C2H2-type zinc-finger fold.

The protein belongs to the ZNF593/BUD20 C2H2-type zinc-finger protein family. Associates with pre-60S ribosomal particles. As to expression, ubiquitous. Detected in spleen, prostate, testis, small intestine, colon and to a minor level in thymus and peripheral blood leukocytes.

It is found in the nucleus. It localises to the nucleolus. Its subcellular location is the cytoplasm. Functionally, involved in pre-60S ribosomal particles maturation by promoting the nuclear export of the 60S ribosome. Negatively modulates the DNA binding activity of Oct-2 and therefore its transcriptional regulatory activity. This chain is Zinc finger protein 593 (ZNF593), found in Homo sapiens (Human).